Consider the following 524-residue polypeptide: Cytochrome P450 1A1 (524 aa).

Residues 33 to 44 form a mitochondrial targeting signal region; that stretch reads WQPRLPKGLKSP. An O-linked (GlcNAc) serine glycan is attached at Ser-71. Phe-228 is a substrate binding site. Cys-461 is a heme binding site.

It belongs to the cytochrome P450 family. In terms of assembly, interacts with cytosolic chaperones HSP70 and HSP90; this interaction is required for initial targeting to mitochondria. Interacts (via mitochondrial targeting signal) with TOMM40 (via N-terminus); this interaction is required for translocation across the mitochondrial outer membrane. Heme is required as a cofactor.

The protein resides in the endoplasmic reticulum membrane. The protein localises to the mitochondrion inner membrane. Its subcellular location is the microsome membrane. It is found in the cytoplasm. It carries out the reaction an organic molecule + reduced [NADPH--hemoprotein reductase] + O2 = an alcohol + oxidized [NADPH--hemoprotein reductase] + H2O + H(+). It catalyses the reaction estrone + reduced [NADPH--hemoprotein reductase] + O2 = 2-hydroxyestrone + oxidized [NADPH--hemoprotein reductase] + H2O + H(+). The catalysed reaction is estrone + reduced [NADPH--hemoprotein reductase] + O2 = 4-hydroxyestrone + oxidized [NADPH--hemoprotein reductase] + H2O + H(+). The enzyme catalyses estrone + reduced [NADPH--hemoprotein reductase] + O2 = 6alpha-hydroxyestrone + oxidized [NADPH--hemoprotein reductase] + H2O + H(+). It carries out the reaction estrone + reduced [NADPH--hemoprotein reductase] + O2 = 15alpha-hydroxyestrone + oxidized [NADPH--hemoprotein reductase] + H2O + H(+). It catalyses the reaction estrone + reduced [NADPH--hemoprotein reductase] + O2 = 16alpha-hydroxyestrone + oxidized [NADPH--hemoprotein reductase] + H2O + H(+). The catalysed reaction is 17beta-estradiol + reduced [NADPH--hemoprotein reductase] + O2 = 2-hydroxy-17beta-estradiol + oxidized [NADPH--hemoprotein reductase] + H2O + H(+). The enzyme catalyses 17beta-estradiol + reduced [NADPH--hemoprotein reductase] + O2 = 4-hydroxy-17beta-estradiol + oxidized [NADPH--hemoprotein reductase] + H2O + H(+). It carries out the reaction 17beta-estradiol + reduced [NADPH--hemoprotein reductase] + O2 = 6alpha-hydroxy-17beta-estradiol + oxidized [NADPH--hemoprotein reductase] + H2O + H(+). It catalyses the reaction 17beta-estradiol + reduced [NADPH--hemoprotein reductase] + O2 = 7alpha-hydroxy-17beta-estradiol + oxidized [NADPH--hemoprotein reductase] + H2O + H(+). The catalysed reaction is 17beta-estradiol + reduced [NADPH--hemoprotein reductase] + O2 = 15alpha-hydroxy-17beta-estradiol + oxidized [NADPH--hemoprotein reductase] + H2O + H(+). The enzyme catalyses (5Z,8Z,11Z)-eicosatrienoate + reduced [NADPH--hemoprotein reductase] + O2 = 19-hydroxy-(5Z,8Z,11Z)-eicosatrienoate + oxidized [NADPH--hemoprotein reductase] + H2O + H(+). It carries out the reaction (5Z,8Z,11Z,14Z)-eicosatetraenoate + reduced [NADPH--hemoprotein reductase] + O2 = 16-hydroxy-(5Z,8Z,11Z,14Z)-eicosatetraenoate + oxidized [NADPH--hemoprotein reductase] + H2O + H(+). It catalyses the reaction (5Z,8Z,11Z,14Z)-eicosatetraenoate + reduced [NADPH--hemoprotein reductase] + O2 = 17-hydroxy-(5Z,8Z,11Z,14Z)-eicosatetraenoate + oxidized [NADPH--hemoprotein reductase] + H2O + H(+). The catalysed reaction is (5Z,8Z,11Z,14Z)-eicosatetraenoate + reduced [NADPH--hemoprotein reductase] + O2 = 18-hydroxy-(5Z,8Z,11Z,14Z)-eicosatetraenoate + oxidized [NADPH--hemoprotein reductase] + H2O + H(+). The enzyme catalyses (5Z,8Z,11Z,14Z)-eicosatetraenoate + reduced [NADPH--hemoprotein reductase] + O2 = 19-hydroxy-(5Z,8Z,11Z,14Z)-eicosatetraenoate + oxidized [NADPH--hemoprotein reductase] + H2O + H(+). It carries out the reaction (5Z,8Z,11Z,14Z,17Z)-eicosapentaenoate + reduced [NADPH--hemoprotein reductase] + O2 = 19-hydroxy-(5Z,8Z,11Z,14Z,17Z)-eicosapentaenoate + oxidized [NADPH--hemoprotein reductase] + H2O + H(+). It catalyses the reaction (5Z,8Z,11Z,14Z)-eicosatetraenoate + reduced [NADPH--hemoprotein reductase] + O2 = (8R,9S)-epoxy-(5Z,11Z,14Z)-eicosatrienoate + oxidized [NADPH--hemoprotein reductase] + H2O + H(+). The catalysed reaction is (5Z,8Z,11Z,14Z)-eicosatetraenoate + reduced [NADPH--hemoprotein reductase] + O2 = (11R,12S)-epoxy-(5Z,8Z,14Z)-eicosatrienoate + oxidized [NADPH--hemoprotein reductase] + H2O + H(+). The enzyme catalyses (5Z,8Z,11Z,14Z)-eicosatetraenoate + reduced [NADPH--hemoprotein reductase] + O2 = (14S,15R)-epoxy-(5Z,8Z,11Z)-eicosatrienoate + oxidized [NADPH--hemoprotein reductase] + H2O + H(+). It carries out the reaction (5Z,8Z,11Z,14Z)-eicosatetraenoate + reduced [NADPH--hemoprotein reductase] + O2 = (14R,15S)-epoxy-(5Z,8Z,11Z)-eicosatrienoate + oxidized [NADPH--hemoprotein reductase] + H2O + H(+). It catalyses the reaction (5Z,8Z,11Z,14Z,17Z)-eicosapentaenoate + reduced [NADPH--hemoprotein reductase] + O2 = (17R,18S)-epoxy-(5Z,8Z,11Z,14Z)-eicosatetraenoate + oxidized [NADPH--hemoprotein reductase] + H2O + H(+). The catalysed reaction is (4Z,7Z,10Z,13Z,16Z,19Z)-docosahexaenoate + reduced [NADPH--hemoprotein reductase] + O2 = (19S,20R)-epoxy-(4Z,7Z,10Z,13Z,16Z)-docosapentaenoate + oxidized [NADPH--hemoprotein reductase] + H2O + H(+). The enzyme catalyses (4Z,7Z,10Z,13Z,16Z,19Z)-docosahexaenoate + reduced [NADPH--hemoprotein reductase] + O2 = (19R,20S)-epoxy-(4Z,7Z,10Z,13Z,16Z)-docosapentaenoate + oxidized [NADPH--hemoprotein reductase] + H2O + H(+). It carries out the reaction all-trans-retinol + reduced [NADPH--hemoprotein reductase] + O2 = all-trans-retinal + oxidized [NADPH--hemoprotein reductase] + 2 H2O + H(+). It catalyses the reaction all-trans-retinal + reduced [NADPH--hemoprotein reductase] + O2 = all-trans-retinoate + oxidized [NADPH--hemoprotein reductase] + H2O + 2 H(+). The catalysed reaction is (13S)-hydroperoxy-(9Z,11E)-octadecadienoate = 13-oxo-(9Z,11E)-octadecadienoate + H2O. The enzyme catalyses (12S)-hydroperoxy-(5Z,8Z,10E,14Z)-eicosatetraenoate = 12-oxo-(5Z,8Z,10E,14Z)-eicosatetraenoate + H2O. It carries out the reaction (15S)-hydroperoxy-(5Z,8Z,11Z,13E)-eicosatetraenoate = 15-oxo-(5Z,8Z,11Z,13E)-eicosatetraenoate + H2O. It catalyses the reaction (5S)-hydroperoxy-(6E,8Z,11Z,14Z)-eicosatetraenoate = 5-oxo-(6E,8Z,11Z,14Z)-eicosatetraenoate + H2O. The protein operates within steroid hormone biosynthesis. Its pathway is lipid metabolism; fatty acid metabolism. It functions in the pathway cofactor metabolism; retinol metabolism. A cytochrome P450 monooxygenase involved in the metabolism of various endogenous substrates, including fatty acids, steroid hormones and vitamins. Mechanistically, uses molecular oxygen inserting one oxygen atom into a substrate, and reducing the second into a water molecule, with two electrons provided by NADPH via cytochrome P450 reductase (CPR; NADPH-ferrihemoprotein reductase). Catalyzes the hydroxylation of carbon-hydrogen bonds. Exhibits high catalytic activity for the formation of hydroxyestrogens from estrone (E1) and 17beta-estradiol (E2), namely 2-hydroxy E1 and E2, as well as D-ring hydroxylated E1 and E2 at the C15alpha and C16alpha positions. Displays different regioselectivities for polyunsaturated fatty acids (PUFA) hydroxylation. Catalyzes the epoxidation of double bonds of certain PUFA. Converts arachidonic acid toward epoxyeicosatrienoic acid (EET) regioisomers, 8,9-, 11,12-, and 14,15-EET, that function as lipid mediators in the vascular system. Displays an absolute stereoselectivity in the epoxidation of eicosapentaenoic acid (EPA) producing the 17(R),18(S) enantiomer. May play an important role in all-trans retinoic acid biosynthesis in extrahepatic tissues. Catalyzes two successive oxidative transformation of all-trans retinol to all-trans retinal and then to the active form all-trans retinoic acid. May also participate in eicosanoids metabolism by converting hydroperoxide species into oxo metabolites (lipoxygenase-like reaction, NADPH-independent). The protein is Cytochrome P450 1A1 (CYP1A1) of Canis lupus familiaris (Dog).